Consider the following 208-residue polypeptide: FMN-dependent NADH:quinone oxidoreductase 4 (208 aa).

The protein belongs to the azoreductase type 1 family. Homodimer. The cofactor is FMN.

It carries out the reaction 2 a quinone + NADH + H(+) = 2 a 1,4-benzosemiquinone + NAD(+). The catalysed reaction is N,N-dimethyl-1,4-phenylenediamine + anthranilate + 2 NAD(+) = 2-(4-dimethylaminophenyl)diazenylbenzoate + 2 NADH + 2 H(+). Quinone reductase that provides resistance to thiol-specific stress caused by electrophilic quinones. Functionally, also exhibits azoreductase activity. Catalyzes the reductive cleavage of the azo bond in aromatic azo compounds to the corresponding amines. This is FMN-dependent NADH:quinone oxidoreductase 4 from Bacillus cereus (strain ZK / E33L).